The primary structure comprises 721 residues: DNA ligase (721 aa).

The segment covering 1 to 19 (MTAKKQGAQASASAPSGDS) has biased composition (low complexity). A disordered region spans residues 1–23 (MTAKKQGAQASASAPSGDSPAER). NAD(+)-binding positions include 48–52 (DADYD), 97–98 (SL), and glutamate 162. The active-site N6-AMP-lysine intermediate is the lysine 164. Residues arginine 185, glutamate 221, lysine 338, and lysine 362 each coordinate NAD(+). Cysteine 456, cysteine 459, cysteine 474, and cysteine 480 together coordinate Zn(2+). One can recognise a BRCT domain in the interval 639–721 (RAPLPLAGKT…LKLLAEVGAA (83 aa)).

It belongs to the NAD-dependent DNA ligase family. LigA subfamily. Requires Mg(2+) as cofactor. Mn(2+) serves as cofactor.

The catalysed reaction is NAD(+) + (deoxyribonucleotide)n-3'-hydroxyl + 5'-phospho-(deoxyribonucleotide)m = (deoxyribonucleotide)n+m + AMP + beta-nicotinamide D-nucleotide.. In terms of biological role, DNA ligase that catalyzes the formation of phosphodiester linkages between 5'-phosphoryl and 3'-hydroxyl groups in double-stranded DNA using NAD as a coenzyme and as the energy source for the reaction. It is essential for DNA replication and repair of damaged DNA. This is DNA ligase from Cupriavidus metallidurans (strain ATCC 43123 / DSM 2839 / NBRC 102507 / CH34) (Ralstonia metallidurans).